A 299-amino-acid chain; its full sequence is Ribosomal RNA small subunit methyltransferase H (299 aa).

S-adenosyl-L-methionine is bound by residues 32–34 (AGH), aspartate 52, phenylalanine 79, aspartate 100, and glutamine 107.

This sequence belongs to the methyltransferase superfamily. RsmH family.

Its subcellular location is the cytoplasm. The enzyme catalyses cytidine(1402) in 16S rRNA + S-adenosyl-L-methionine = N(4)-methylcytidine(1402) in 16S rRNA + S-adenosyl-L-homocysteine + H(+). Its function is as follows. Specifically methylates the N4 position of cytidine in position 1402 (C1402) of 16S rRNA. The protein is Ribosomal RNA small subunit methyltransferase H of Mycoplasmopsis pulmonis (strain UAB CTIP) (Mycoplasma pulmonis).